Consider the following 503-residue polypeptide: uncharacterized protein (503 aa).

ABC transporter domains follow at residues valine 8 to aspartate 249 and isoleucine 261 to isoleucine 499. Glycine 43–serine 50 serves as a coordination point for ATP.

Belongs to the ABC transporter superfamily.

Its function is as follows. Probably part of a binding-protein-dependent transport system YphDEF. Probably responsible for energy coupling to the transport system. This is an uncharacterized protein from Escherichia coli (strain K12).